A 487-amino-acid chain; its full sequence is N-succinylglutamate 5-semialdehyde dehydrogenase (487 aa).

221–226 (GSSDTG) serves as a coordination point for NAD(+). Active-site residues include Glu244 and Cys278.

It belongs to the aldehyde dehydrogenase family. AstD subfamily.

The catalysed reaction is N-succinyl-L-glutamate 5-semialdehyde + NAD(+) + H2O = N-succinyl-L-glutamate + NADH + 2 H(+). The protein operates within amino-acid degradation; L-arginine degradation via AST pathway; L-glutamate and succinate from L-arginine: step 4/5. In terms of biological role, catalyzes the NAD-dependent reduction of succinylglutamate semialdehyde into succinylglutamate. This Burkholderia ambifaria (strain ATCC BAA-244 / DSM 16087 / CCUG 44356 / LMG 19182 / AMMD) (Burkholderia cepacia (strain AMMD)) protein is N-succinylglutamate 5-semialdehyde dehydrogenase.